The sequence spans 435 residues: 3-phosphoshikimate 1-carboxyvinyltransferase (435 aa).

3-phosphoshikimate is bound by residues K21, S22, and R26. K21 is a phosphoenolpyruvate binding site. Residues G98 and R126 each coordinate phosphoenolpyruvate. 3-phosphoshikimate-binding residues include S169, S170, Q171, S197, D312, and K339. Residue Q171 coordinates phosphoenolpyruvate. The active-site Proton acceptor is D312. The phosphoenolpyruvate site is built by R343, R386, and K412.

The protein belongs to the EPSP synthase family. As to quaternary structure, monomer.

It is found in the cytoplasm. It catalyses the reaction 3-phosphoshikimate + phosphoenolpyruvate = 5-O-(1-carboxyvinyl)-3-phosphoshikimate + phosphate. The protein operates within metabolic intermediate biosynthesis; chorismate biosynthesis; chorismate from D-erythrose 4-phosphate and phosphoenolpyruvate: step 6/7. Catalyzes the transfer of the enolpyruvyl moiety of phosphoenolpyruvate (PEP) to the 5-hydroxyl of shikimate-3-phosphate (S3P) to produce enolpyruvyl shikimate-3-phosphate and inorganic phosphate. The sequence is that of 3-phosphoshikimate 1-carboxyvinyltransferase from Clostridium beijerinckii (strain ATCC 51743 / NCIMB 8052) (Clostridium acetobutylicum).